The chain runs to 199 residues: HTH-type transcriptional regulator BetI (199 aa).

The 61-residue stretch at 8–68 (EIRKPQLVKA…ETMREILRQL (61 aa)) folds into the HTH tetR-type domain. The segment at residues 31–50 (SISLISKEAGVSTGIINHYF) is a DNA-binding region (H-T-H motif).

Its pathway is amine and polyamine biosynthesis; betaine biosynthesis via choline pathway [regulation]. Its function is as follows. Repressor involved in the biosynthesis of the osmoprotectant glycine betaine. It represses transcription of the choline transporter BetT and the genes of BetAB involved in the synthesis of glycine betaine. The protein is HTH-type transcriptional regulator BetI of Vibrio parahaemolyticus serotype O3:K6 (strain RIMD 2210633).